A 301-amino-acid polypeptide reads, in one-letter code: MNRNGSTKDPRRMTGAATGEISRYFNDKAPKDIRRAIEKADKDDILSTTYPYDAEMTAKDYRAQMEALQIELVKLQAWIKQSGARVALLFEGRDAAGKGGTIKRFRENLNPRGARVVALSKPTEAERSQWYFQRYIQHLPSAGELVFYDRSWYNRGVVEHVFGWCDEEQRERFFRQVMPFEHDLVDDGIHLFKFWLNVGRAEQLRRFHDRERDPLKQWKLSPVDIAGLDKWEAYTTAISQTLTRSHSDRAPWTVIRSDDKKRARLAAIRTVLSGIDYDNKDRAAVGQPDAAICGGPDIWDA.

Residues 1–12 (MNRNGSTKDPRR) are compositionally biased toward basic and acidic residues. Positions 1–21 (MNRNGSTKDPRRMTGAATGEI) are disordered.

It belongs to the polyphosphate kinase 2 (PPK2) family. Class I subfamily. It depends on Mg(2+) as a cofactor.

It carries out the reaction [phosphate](n) + ATP = [phosphate](n+1) + ADP. The catalysed reaction is [phosphate](n) + CTP = [phosphate](n+1) + CDP. The enzyme catalyses [phosphate](n) + GTP = [phosphate](n+1) + GDP. It catalyses the reaction [phosphate](n) + UTP = [phosphate](n+1) + UDP. In terms of biological role, uses inorganic polyphosphate (polyP) as a donor to convert NDP to NTP. PolyP hydrolysis is slightly faster with UDP, but it can also use ADP, GDP and CDP. The sequence is that of NDP-polyphosphate phosphotransferase 3 from Ruegeria pomeroyi (strain ATCC 700808 / DSM 15171 / DSS-3) (Silicibacter pomeroyi).